The sequence spans 201 residues: Ran-specific GTPase-activating protein 1 (201 aa).

2 stretches are compositionally biased toward basic and acidic residues: residues 1-17 and 32-66; these read MSSEDKKPVVDKKEEAA and KKAEKPETKKDEEDTKEETKKEGDDAPESPDIHFE. The interval 1-66 is disordered; the sequence is MSSEDKKPVV…APESPDIHFE (66 aa). S60 bears the Phosphoserine mark. The 137-residue stretch at 64 to 200 folds into the RanBD1 domain; it reads HFEPVVHLEK…FEKAQEINKK (137 aa).

This sequence belongs to the RANBP1 family. As to quaternary structure, interacts with GSP1 and PRP20.

Its subcellular location is the cytoplasm. The protein localises to the nucleus. In terms of biological role, important for the export of protein containing nuclear export signal (NES) out of the nucleus. Stimulates the GTPase activity of GSP1 and GSP2. The polypeptide is Ran-specific GTPase-activating protein 1 (YRB1) (Saccharomyces cerevisiae (strain ATCC 204508 / S288c) (Baker's yeast)).